A 166-amino-acid chain; its full sequence is Photosystem I assembly protein Ycf3 (166 aa).

3 TPR repeats span residues 35-68, 72-105, and 120-153; these read AFTY…EIDP, SYIL…NPSL, and GEQA…APTN.

It belongs to the Ycf3 family.

The protein resides in the plastid. The protein localises to the chloroplast thylakoid membrane. Functionally, essential for the assembly of the photosystem I (PSI) complex. May act as a chaperone-like factor to guide the assembly of the PSI subunits. This Oltmannsiellopsis viridis (Marine flagellate) protein is Photosystem I assembly protein Ycf3.